A 575-amino-acid polypeptide reads, in one-letter code: Glycosyltransferase family 92 protein At1g27200 (575 aa).

A helical transmembrane segment spans residues 22 to 44 (FLSQRYLILCFCCFFVLLFFLSS). The GT92 domain maps to 293–540 (LCVCTMLWNQ…TEAIEPPDWK (248 aa)).

Belongs to the glycosyltransferase 92 family.

The protein localises to the membrane. The chain is Glycosyltransferase family 92 protein At1g27200 from Arabidopsis thaliana (Mouse-ear cress).